The following is a 464-amino-acid chain: Chromosomal replication initiator protein DnaA (464 aa).

Residues 1 to 82 are domain I, interacts with DnaA modulators; that stretch reads MKNAAELWHN…GSRLDIQFIE (82 aa). The interval 82–125 is domain II; sequence EEGQAKHMLDRQNEEVEVMEVAPAKTKAQKTPKSSDELVMSELG. Positions 126–342 are domain III, AAA+ region; the sequence is QLNEKYTFDT…GALTRVIAYA (217 aa). The ATP site is built by glycine 170, glycine 172, lysine 173, and threonine 174. The domain IV, binds dsDNA stretch occupies residues 343–464; that stretch reads NLVGRTIDPN…EQIKHELKHS (122 aa).

Belongs to the DnaA family. In terms of assembly, oligomerizes as a right-handed, spiral filament on DNA at oriC.

The protein localises to the cytoplasm. Its function is as follows. Plays an essential role in the initiation and regulation of chromosomal replication. ATP-DnaA binds to the origin of replication (oriC) to initiate formation of the DNA replication initiation complex once per cell cycle. Binds the DnaA box (a 9 base pair repeat at the origin) and separates the double-stranded (ds)DNA. Forms a right-handed helical filament on oriC DNA; dsDNA binds to the exterior of the filament while single-stranded (ss)DNA is stabiized in the filament's interior. The ATP-DnaA-oriC complex binds and stabilizes one strand of the AT-rich DNA unwinding element (DUE), permitting loading of DNA polymerase. After initiation quickly degrades to an ADP-DnaA complex that is not apt for DNA replication. Binds acidic phospholipids. The polypeptide is Chromosomal replication initiator protein DnaA (Exiguobacterium sibiricum (strain DSM 17290 / CCUG 55495 / CIP 109462 / JCM 13490 / 255-15)).